The primary structure comprises 223 residues: DNA mismatch repair protein MutH (223 aa).

This sequence belongs to the MutH family.

Its subcellular location is the cytoplasm. In terms of biological role, sequence-specific endonuclease that cleaves unmethylated GATC sequences. It is involved in DNA mismatch repair. The sequence is that of DNA mismatch repair protein MutH from Shewanella baltica (strain OS223).